A 269-amino-acid chain; its full sequence is Myelin protein zero-like protein 1 (269 aa).

Residues 1–35 form the signal peptide; that stretch reads MAAPAGAGALIASPDRRRCLWSVLAAALGLLTYGV. The 111-residue stretch at 36 to 146 folds into the Ig-like V-type domain; sequence SALEVYTPKE…VKNPPDIVVQ (111 aa). The Extracellular segment spans residues 36 to 162; sequence SALEVYTPKE…YVVEKEILPA (127 aa). Residues asparagine 50, asparagine 64, and asparagine 130 are each glycosylated (N-linked (GlcNAc...) asparagine). Cysteines 58 and 135 form a disulfide. The helical transmembrane segment at 163 to 183 threads the bilayer; the sequence is FPVWVVVGIVTAVVLGLTLLI. Over 184-269 the chain is Cytoplasmic; the sequence is TMILAVIYRR…SVVYADIRKN (86 aa). The segment at 202 to 238 is disordered; that stretch reads GCNTSENVSPVKQVSRKSPSDTEGLVKSLPSGSHQGP. Over residues 203-213 the composition is skewed to polar residues; that stretch reads CNTSENVSPVK. A phosphoserine mark is found at serine 206, serine 210, serine 219, and serine 221. The short motif at 239-244 is the ITIM motif 1 element; that stretch reads VIYAQL. Tyrosine 241 is subject to Phosphotyrosine. Serine 260 is modified (phosphoserine). Positions 261–266 match the ITIM motif 2 motif; the sequence is VVYADI. Tyrosine 263 carries the post-translational modification Phosphotyrosine.

The protein belongs to the myelin P0 protein family. Interacts with phosphorylated PTPN11/SHP-2. Phosphorylated on tyrosine residues upon stimulation with pervanadate and concanavalin-A (ConA). Phosphorylation at Tyr-241 and Tyr-263 is required for interaction with PTPN11/SHP-2. Dephosphorylated by PTPN11/SHP-2 (in vitro). Post-translationally, N-glycosylated.

The protein resides in the membrane. Cell surface receptor, which is involved in signal transduction processes. Recruits PTPN11/SHP-2 to the cell membrane and is a putative substrate of PTPN11/SHP-2. Is a major receptor for concanavalin-A (ConA) and is involved in cellular signaling induced by ConA, which probably includes Src family tyrosine-protein kinases. May be involved in regulation of integrin-mediated cell motility. The sequence is that of Myelin protein zero-like protein 1 (MPZL1) from Bos taurus (Bovine).